The following is a 1060-amino-acid chain: MPKRTDIKKIMVIGSGPIIIGQAAEFDYAGTQACLALKEEGYEVVLVNSNPATIMTDKEIADHVYIEPITLEFVSRILRKERPDALLPTLGGQTGLNMAMELSESGILDELNVELLGTKLSAIDQAEDRDLFKQLMEELEQPIPESEIVNTVEQAVAFAKRIGYPIIVRPAFTLGGTGGGMCDTEEELRQIAENGLKLSPVTQCLIEKSIAGFKEIEYEVMRDSADNAIVVCNMENFDPVGIHTGDSIVFAPSQTLSDYEYQMLRDASLKIIRALKIEGGCNVQLALDPHSFNYYVIEVNPRVSRSSALASKATGYPIAKLAAKIAVGLTLDEMKNPVTGTTYAEFEPALDYVVSKIPRWPFDKFEKGARELGTQMKATGEVMAIGRNIEESLLKAVRSLEIGAYHNELAELSHVSDLELTKKMVHAQDDRLFYLSEAIRRGYSIEELQSLTKIDLFFLDKLLHIIEIETALESHVDNVAVLKEAKQNGFSDRKIAALWGQTEQAIADFRRANQIVPVYKMVDTCAAEFESHTPYFYSTYEVENESNVSKKPSVLVLGSGPIRIGQGVEFDYATVHSVKAIQAAGYEAIIMNSNPETVSTDFSVSDKLYFEPLTLEDVMNVIDLENPIGVIVQFGGQTAINLAEPLTKQGVKILGTTIEDLDRAENRDLFEQALQELAIPQPPGDTATSAEEAVVIADRIGYPVLVRPSYVLGGRAMEIVENQKDLEDYMRHAVKASPEHPVLVDSYLLGQECEVDAICDGETVLIPGIMEHIERAGVHSGDSMAVYPPQYLSQEIQATIADYTKKLALGLNCVGMMNIQFVIHENRVYVIEVNPRASRTVPFLSKITGIPMAQVATKAILGEKLTDLGYQDGLYPESKQVHVKAPVFSFTKLQKVDTYLGPEMKSTGEVMGSDYYLEKALYKAFEASGLHLPSYGAVLFTIADETKEEALEIAKRFSAIGYSLVATEGTADFLAKHQLPVKKVTKISNPEGETVLDVIRNGNAQVVISTMDKNRSSANQDGFSIRREAVEHGIPLFTSLDTANAILKVLESRAFTTEAI.

A carboxyphosphate synthetic domain region spans residues 1 to 401 (MPKRTDIKKI…SLLKAVRSLE (401 aa)). ATP is bound by residues R129, R169, G175, G176, K208, I210, E215, G241, I242, H243, Q284, and E298. Residues 133–327 (KQLMEELEQP…IAKLAAKIAV (195 aa)) enclose the ATP-grasp 1 domain. The Mg(2+) site is built by Q284, E298, and N300. The Mn(2+) site is built by Q284, E298, and N300. An oligomerization domain region spans residues 402–546 (IGAYHNELAE…YSTYEVENES (145 aa)). The interval 547-929 (NVSKKPSVLV…ALYKAFEASG (383 aa)) is carbamoyl phosphate synthetic domain. The ATP-grasp 2 domain maps to 671–861 (EQALQELAIP…MAQVATKAIL (191 aa)). Residues R707, S746, L748, E752, G777, V778, H779, S780, Q820, and E832 each contribute to the ATP site. Mg(2+) contacts are provided by Q820, E832, and N834. Mn(2+)-binding residues include Q820, E832, and N834. Residues 930–1060 (LHLPSYGAVL…ESRAFTTEAI (131 aa)) form the MGS-like domain. The interval 930 to 1060 (LHLPSYGAVL…ESRAFTTEAI (131 aa)) is allosteric domain.

The protein belongs to the CarB family. As to quaternary structure, composed of two chains; the small (or glutamine) chain promotes the hydrolysis of glutamine to ammonia, which is used by the large (or ammonia) chain to synthesize carbamoyl phosphate. Tetramer of heterodimers (alpha,beta)4. Requires Mg(2+) as cofactor. It depends on Mn(2+) as a cofactor.

The catalysed reaction is hydrogencarbonate + L-glutamine + 2 ATP + H2O = carbamoyl phosphate + L-glutamate + 2 ADP + phosphate + 2 H(+). It carries out the reaction hydrogencarbonate + NH4(+) + 2 ATP = carbamoyl phosphate + 2 ADP + phosphate + 2 H(+). It participates in amino-acid biosynthesis; L-arginine biosynthesis; carbamoyl phosphate from bicarbonate: step 1/1. The protein operates within pyrimidine metabolism; UMP biosynthesis via de novo pathway; (S)-dihydroorotate from bicarbonate: step 1/3. In terms of biological role, large subunit of the glutamine-dependent carbamoyl phosphate synthetase (CPSase). CPSase catalyzes the formation of carbamoyl phosphate from the ammonia moiety of glutamine, carbonate, and phosphate donated by ATP, constituting the first step of 2 biosynthetic pathways, one leading to arginine and/or urea and the other to pyrimidine nucleotides. The large subunit (synthetase) binds the substrates ammonia (free or transferred from glutamine from the small subunit), hydrogencarbonate and ATP and carries out an ATP-coupled ligase reaction, activating hydrogencarbonate by forming carboxy phosphate which reacts with ammonia to form carbamoyl phosphate. The protein is Carbamoyl phosphate synthase large chain of Enterococcus faecalis (strain ATCC 700802 / V583).